Consider the following 308-residue polypeptide: Probable very-long-chain enoyl-CoA reductase art-1 (308 aa).

The region spanning Val7–Gln85 is the Ubiquitin-like domain. 4 helical membrane passes run Phe112–Phe132, Trp169–Phe189, Val194–Leu214, and Trp255–Phe275.

The protein belongs to the steroid 5-alpha reductase family.

It is found in the endoplasmic reticulum membrane. The catalysed reaction is a very-long-chain 2,3-saturated fatty acyl-CoA + NADP(+) = a very-long-chain (2E)-enoyl-CoA + NADPH + H(+). It functions in the pathway lipid metabolism; fatty acid biosynthesis. In terms of biological role, catalyzes the last of the four reactions of the long-chain fatty acids elongation cycle. This endoplasmic reticulum-bound enzymatic process, allows the addition of 2 carbons to the chain of long- and very long-chain fatty acids/VLCFAs per cycle. This enzyme reduces the trans-2,3-enoyl-CoA fatty acid intermediate to an acyl-CoA that can be further elongated by entering a new cycle of elongation. Thereby, it participates in the production of VLCFAs of different chain lengths that are involved in multiple biological processes as precursors of membrane lipids and lipid mediators. This Caenorhabditis elegans protein is Probable very-long-chain enoyl-CoA reductase art-1 (art-1).